Reading from the N-terminus, the 189-residue chain is UPF0301 protein RP032 (189 aa).

This sequence belongs to the UPF0301 (AlgH) family.

In Rickettsia prowazekii (strain Madrid E), this protein is UPF0301 protein RP032.